Consider the following 88-residue polypeptide: Arminin 1c (88 aa).

A signal peptide spans 1–18; the sequence is MKPVFVILFLTCIAFTYA. A propeptide spanning residues 19 to 57 is cleaved from the precursor; the sequence is ESYEDVKEEIKNEVEREIFEDLEEESDVLDSNVREFNDA. Valine amide is present on Val85.

It belongs to the arminin family. As to expression, expressed in entodermal epithelium along the body column.

Its subcellular location is the secreted. It localises to the target cell membrane. In terms of biological role, antimicrobial peptide with a broad-spectrum antimicrobial activity. Keeps its antibacterial activity under a wide range of salt concentrations that mimic physiological conditions of human blood, which is surprising, since Hydra is an obligate freshwater animal with nearly no salt tolerance. Does not affect red blood cells. In Hydra vulgaris (Hydra), this protein is Arminin 1c.